The chain runs to 78 residues: Translational regulator CsrA (78 aa).

This sequence belongs to the CsrA/RsmA family. In terms of assembly, homodimer; the beta-strands of each monomer intercalate to form a hydrophobic core, while the alpha-helices form wings that extend away from the core.

The protein resides in the cytoplasm. A translational regulator that binds mRNA to regulate translation initiation and/or mRNA stability. Usually binds in the 5'-UTR at or near the Shine-Dalgarno sequence preventing ribosome-binding, thus repressing translation. Its main target seems to be the major flagellin gene, while its function is anatagonized by FliW. This chain is Translational regulator CsrA, found in Natranaerobius thermophilus (strain ATCC BAA-1301 / DSM 18059 / JW/NM-WN-LF).